The sequence spans 605 residues: Alpha-amylase (605 aa).

Residues Met1 to Ala33 form the signal peptide. Ca(2+)-binding residues include Asn130 and Asp189. The Nucleophile role is filled by Asp219. His223 is a Ca(2+) binding site. The active-site Proton donor is the Glu253. The 106-residue stretch at Gly500–Arg605 folds into the CBM20 domain.

It belongs to the glycosyl hydrolase 13 family. Monomer. The cofactor is Ca(2+).

It carries out the reaction Endohydrolysis of (1-&gt;4)-alpha-D-glucosidic linkages in polysaccharides containing three or more (1-&gt;4)-alpha-linked D-glucose units.. This chain is Alpha-amylase (tam), found in Thermomonospora curvata.